The primary structure comprises 434 residues: Chaperone SurA (434 aa).

A signal peptide spans 1–22; that stretch reads MKPSKHLIFALFALAISQPTMA. 2 PpiC domains span residues 173 to 274 and 283 to 383; these read DVEY…KIMD and IEEV…QLEE.

The protein resides in the periplasm. It carries out the reaction [protein]-peptidylproline (omega=180) = [protein]-peptidylproline (omega=0). Functionally, chaperone involved in the correct folding and assembly of outer membrane proteins. Recognizes specific patterns of aromatic residues and the orientation of their side chains, which are found more frequently in integral outer membrane proteins. May act in both early periplasmic and late outer membrane-associated steps of protein maturation. The polypeptide is Chaperone SurA (Shewanella sp. (strain MR-7)).